Here is a 1696-residue protein sequence, read N- to C-terminus: PH domain leucine-rich repeat protein phosphatase 1 (1696 aa).

N-acetylmethionine is present on methionine 1. Disordered regions lie at residues 1–97 (MEPA…GGGA) and 222–398 (LGHG…VVGE). Residues 79-92 (VPQPAAGGAAPVTA) are compositionally biased toward low complexity. Polar residues predominate over residues 313–325 (DTESFSLSPSAES). Serine 378 carries the phosphoserine modification. One can recognise a PH domain in the interval 499–599 (RIQLSGMYNV…WLRQVSKVAS (101 aa)). 18 LRR repeats span residues 601-622 (RISS…LFYS), 624-645 (DLTH…PAAR), 655-676 (KLKS…VCSI), 678-699 (TLAE…VGAM), 701-722 (NLQT…LENM), 724-746 (QLSY…EKLT), 836-857 (FLKA…PVPN), 858-879 (YLSY…VCES), 881-902 (KLEV…LFCN), 904-925 (SLRK…LERT), 926-947 (SVEV…LLMK), 950-971 (SLRF…TLSE), 976-996 (ILQE…PLLT), 1000-1021 (RLKI…KMAK), 1024-1045 (ELEE…IMNC), 1047-1068 (RMHT…MQLP), 1069-1090 (EVKC…ENLP), and 1092-1113 (KLQE…SLEL). Residues 1138 to 1385 (SHGYTEASGV…DSISAVVVQL (248 aa)) enclose the PPM-type phosphatase domain. Mn(2+) is bound by residues aspartate 1173, glycine 1174, lysine 1337, and aspartate 1376. Disordered regions lie at residues 1422-1473 (RPSD…SPAY) and 1610-1696 (KPGG…DTPL). Composition is skewed to low complexity over residues 1431–1452 (SSSS…MSSE), 1647–1660 (QQQQ…QQQQ), and 1670–1680 (QAQAQAQAQAQ). The PDZ-binding signature appears at 1694–1696 (TPL).

In terms of assembly, interacts with the nucleotide free form of K-Ras (KRAS) via its LRR repeats. Interacts with AKT2, AKT3 and PRKCB isoform beta-II. Interacts with WDR48 and USP12. It depends on Mn(2+) as a cofactor. As to expression, mainly present in brain (at protein level). Isoform 2 is more abundant in adult brain neurons than isoform 1 in. Isoforms 1 and 2 are expressed in the retina but not found in rod outer segments.

The protein localises to the cytoplasm. It is found in the membrane. It localises to the cell membrane. Its subcellular location is the nucleus. The protein resides in the nucleoplasm. The protein localises to the nucleus membrane. The catalysed reaction is O-phospho-L-seryl-[protein] + H2O = L-seryl-[protein] + phosphate. It carries out the reaction O-phospho-L-threonyl-[protein] + H2O = L-threonyl-[protein] + phosphate. Insensitive to okadaic acid. Deubiquitination by WDR48-USP12 complex positively regulates PHLPP1 stability. Its function is as follows. Protein phosphatase involved in regulation of Akt and PKC signaling. Mediates dephosphorylation in the C-terminal domain hydrophobic motif of members of the AGC Ser/Thr protein kinase family; specifically acts on 'Ser-473' of AKT2 and AKT3, 'Ser-660' of PRKCB and 'Ser-657' of PRKCA. Isoform 2 seems to have a major role in regulating Akt signaling in hippocampal neurons while isoform 1 may promote Akt and PKC activation and inhibit ERK signaling. Akt regulates the balance between cell survival and apoptosis through a cascade that primarily alters the function of transcription factors that regulate pro- and antiapoptotic genes. Dephosphorylation of 'Ser-473' of Akt triggers apoptosis and suppression of tumor growth. Dephosphorylation of PRKCA and PRKCB leads to their destabilization and degradation. Dephosphorylates STK4 on 'Thr-387' leading to STK4 activation and apoptosis. Dephosphorylates RPS6KB1 and is involved in regulation of cap-dependent translation. Inhibits cancer cell proliferation and may act as a tumor suppressor. Dephosphorylates RAF1 inhibiting its kinase activity. May act as a negative regulator of K-Ras signaling in membrane rafts. Involved in the hippocampus-dependent long-term memory formation. Involved in circadian control by regulating the consolidation of circadian periodicity after resetting. Involved in development and function of regulatory T-cells. This Rattus norvegicus (Rat) protein is PH domain leucine-rich repeat protein phosphatase 1 (Phlpp1).